The primary structure comprises 186 residues: Nicotinamide-nucleotide adenylyltransferase (186 aa).

This sequence belongs to the archaeal NMN adenylyltransferase family.

The protein localises to the cytoplasm. The enzyme catalyses beta-nicotinamide D-ribonucleotide + ATP + H(+) = diphosphate + NAD(+). It participates in cofactor biosynthesis; NAD(+) biosynthesis; NAD(+) from nicotinamide D-ribonucleotide: step 1/1. In Pyrococcus abyssi (strain GE5 / Orsay), this protein is Nicotinamide-nucleotide adenylyltransferase.